Reading from the N-terminus, the 363-residue chain is Protein RecA (363 aa).

Residue 79-86 coordinates ATP; that stretch reads GPESSGKT.

It belongs to the RecA family.

It localises to the cytoplasm. Can catalyze the hydrolysis of ATP in the presence of single-stranded DNA, the ATP-dependent uptake of single-stranded DNA by duplex DNA, and the ATP-dependent hybridization of homologous single-stranded DNAs. It interacts with LexA causing its activation and leading to its autocatalytic cleavage. In Borrelia duttonii (strain Ly), this protein is Protein RecA.